A 385-amino-acid chain; its full sequence is Putative nickel insertion protein (385 aa).

The protein belongs to the LarC family.

This Geobacter sp. (strain M21) protein is Putative nickel insertion protein.